The following is a 256-amino-acid chain: MFYDFVPQSRFLLGTAGYPSPQILQQAAEASKSEIITVSLRREGGQGGAFRELLTQLNKRILPNTAGCHTVKEAVTTAHMARELFNTRWIKLEVIGHADTLQPDPFALVEAARILCADGFQVFPYTTEDLILGEKLLEAGCELLMPWGAPIGSGQGLRNIEGLRSMRSWFKDIPLIIDAGIGSPSQAALAMEMGFDAILLNTAVAKAQDPRRMAQAFAAAIRAGYDARGAGLIERRDMATASTPIFGMAQFSSQEW.

Lys91 functions as the Schiff-base intermediate with DXP in the catalytic mechanism. 1-deoxy-D-xylulose 5-phosphate contacts are provided by residues Gly152, 179-180 (AG), and 201-202 (NT).

The protein belongs to the ThiG family. As to quaternary structure, homotetramer. Forms heterodimers with either ThiH or ThiS.

The protein resides in the cytoplasm. The catalysed reaction is [ThiS sulfur-carrier protein]-C-terminal-Gly-aminoethanethioate + 2-iminoacetate + 1-deoxy-D-xylulose 5-phosphate = [ThiS sulfur-carrier protein]-C-terminal Gly-Gly + 2-[(2R,5Z)-2-carboxy-4-methylthiazol-5(2H)-ylidene]ethyl phosphate + 2 H2O + H(+). The protein operates within cofactor biosynthesis; thiamine diphosphate biosynthesis. Catalyzes the rearrangement of 1-deoxy-D-xylulose 5-phosphate (DXP) to produce the thiazole phosphate moiety of thiamine. Sulfur is provided by the thiocarboxylate moiety of the carrier protein ThiS. In vitro, sulfur can be provided by H(2)S. The chain is Thiazole synthase from Erwinia tasmaniensis (strain DSM 17950 / CFBP 7177 / CIP 109463 / NCPPB 4357 / Et1/99).